Consider the following 362-residue polypeptide: Phosphoserine aminotransferase (362 aa).

Arg-43 is a binding site for L-glutamate. Residues 77–78 (AT), Trp-103, Thr-153, Asp-173, and Gln-196 each bind pyridoxal 5'-phosphate. Residue Lys-197 is modified to N6-(pyridoxal phosphate)lysine. A pyridoxal 5'-phosphate-binding site is contributed by 238–239 (NT).

Belongs to the class-V pyridoxal-phosphate-dependent aminotransferase family. SerC subfamily. In terms of assembly, homodimer. The cofactor is pyridoxal 5'-phosphate.

The protein resides in the cytoplasm. It carries out the reaction O-phospho-L-serine + 2-oxoglutarate = 3-phosphooxypyruvate + L-glutamate. The enzyme catalyses 4-(phosphooxy)-L-threonine + 2-oxoglutarate = (R)-3-hydroxy-2-oxo-4-phosphooxybutanoate + L-glutamate. The protein operates within amino-acid biosynthesis; L-serine biosynthesis; L-serine from 3-phospho-D-glycerate: step 2/3. It participates in cofactor biosynthesis; pyridoxine 5'-phosphate biosynthesis; pyridoxine 5'-phosphate from D-erythrose 4-phosphate: step 3/5. Functionally, catalyzes the reversible conversion of 3-phosphohydroxypyruvate to phosphoserine and of 3-hydroxy-2-oxo-4-phosphonooxybutanoate to phosphohydroxythreonine. In Acidithiobacillus ferrooxidans (strain ATCC 23270 / DSM 14882 / CIP 104768 / NCIMB 8455) (Ferrobacillus ferrooxidans (strain ATCC 23270)), this protein is Phosphoserine aminotransferase.